The sequence spans 461 residues: O-methyltransferase CTB2 (461 aa).

Residue Asp288 coordinates S-adenosyl-L-methionine. His339 serves as the catalytic Proton acceptor.

Belongs to the class I-like SAM-binding methyltransferase superfamily. Cation-independent O-methyltransferase family. COMT subfamily.

Its pathway is mycotoxin biosynthesis. Its function is as follows. O-methyltransferase; part of the gene cluster that mediates the biosynthesis of cercosporin, a light-activated, non-host-selective toxin. The perylenequinone chromophore of cercosporin absorbs light energy to attain an electronically-activated triplet state and produces active oxygen species such as the hydroxyl radical, superoxide, hydrogen peroxide or singlet oxygen upon reaction with oxygen molecules. These reactive oxygen species cause damage to various cellular components including lipids, proteins and nucleic acids. The first step of cercosporin biosynthesis is performed by the polyketide synthase CTB1 which catalyzes the formation of nor-toralactone. The starter unit acyltransferase (SAT) domain of CTB1 initiates polyketide extension by the selective utilization of acetyl-CoA, which is elongated to the heptaketide in the beta-ketoacyl synthase (KS) domain by successive condensations with six malonyl units introduced by the malonyl acyltransferase (MAT) domain. The product template (PT) domain catalyzes C4-C9 and C2-C11 aldol cyclizations and dehydrations to a trihydroxynaphthalene, which is thought to be delivered to the thioesterase (TE) domain for product release. The bifunctional enzyme CTB3 then methylates nor-toralactone to toralactone before conducting an unusual oxidative aromatic ring opening. The O-methyltransferase CTB2 further methylates the nascent OH-6 of the CBT3 product, blocking further oxidation at this site before the reductase CTB6 reduces the 2-oxopropyl ketone at position C7, giving naphthalene. The FAD-dependent monooxygenase CTB5 in concert with the multicopper oxidase CTB12 are responsible for homodimerization of naphthalene with CTB7 installing the dioxepine moiety, finally producing cercosporin. The fasciclin domain-containing protein CTB11 might act with CTB5 and CTB12 whereas the roles of CTB9 and CTB10 have still to be elucidated. This chain is O-methyltransferase CTB2, found in Cercospora nicotianae (Barn spot disease fungus).